Here is a 189-residue protein sequence, read N- to C-terminus: Peptidyl-tRNA hydrolase (189 aa).

Tyrosine 14 serves as a coordination point for tRNA. Histidine 19 serves as the catalytic Proton acceptor. 3 residues coordinate tRNA: phenylalanine 64, asparagine 66, and asparagine 112.

It belongs to the PTH family. As to quaternary structure, monomer.

It is found in the cytoplasm. The enzyme catalyses an N-acyl-L-alpha-aminoacyl-tRNA + H2O = an N-acyl-L-amino acid + a tRNA + H(+). Functionally, hydrolyzes ribosome-free peptidyl-tRNAs (with 1 or more amino acids incorporated), which drop off the ribosome during protein synthesis, or as a result of ribosome stalling. Catalyzes the release of premature peptidyl moieties from peptidyl-tRNA molecules trapped in stalled 50S ribosomal subunits, and thus maintains levels of free tRNAs and 50S ribosomes. In Zymomonas mobilis subsp. mobilis (strain ATCC 31821 / ZM4 / CP4), this protein is Peptidyl-tRNA hydrolase.